We begin with the raw amino-acid sequence, 68 residues long: U-scoloptoxin(02)-Er1a (68 aa).

Residues M1–T20 form the signal peptide. Intrachain disulfides connect C30-C52, C38-C58, and C42-C60.

Belongs to the invertebrate defensin family. In terms of tissue distribution, expressed by the venom gland.

It localises to the secreted. In terms of biological role, antibacterial peptide mostly active against Gram-positive bacteria. This Ethmostigmus rubripes (Giant centipede) protein is U-scoloptoxin(02)-Er1a.